The primary structure comprises 196 residues: Imidazoleglycerol-phosphate dehydratase (196 aa).

This sequence belongs to the imidazoleglycerol-phosphate dehydratase family.

Its subcellular location is the cytoplasm. The enzyme catalyses D-erythro-1-(imidazol-4-yl)glycerol 3-phosphate = 3-(imidazol-4-yl)-2-oxopropyl phosphate + H2O. It functions in the pathway amino-acid biosynthesis; L-histidine biosynthesis; L-histidine from 5-phospho-alpha-D-ribose 1-diphosphate: step 6/9. The protein is Imidazoleglycerol-phosphate dehydratase of Ralstonia nicotianae (strain ATCC BAA-1114 / GMI1000) (Ralstonia solanacearum).